We begin with the raw amino-acid sequence, 506 residues long: Trans-cinnamate 4-monooxygenase (506 aa).

The helical transmembrane segment at 3-23 threads the bilayer; sequence LLLLEKALLGLFAAAVVAIAV. (E)-cinnamate is bound by residues 213–218 and alanine 306; that span reads RSRLAQ. Position 447 (cysteine 447) interacts with heme.

It belongs to the cytochrome P450 family. Requires heme as cofactor.

It is found in the membrane. It catalyses the reaction (E)-cinnamate + reduced [NADPH--hemoprotein reductase] + O2 = (E)-4-coumarate + oxidized [NADPH--hemoprotein reductase] + H2O + H(+). It functions in the pathway phenylpropanoid metabolism; trans-4-coumarate biosynthesis; trans-4-coumarate from trans-cinnamate: step 1/1. Its function is as follows. Catalyzes the first oxidative step of the phenylpropanoid pathway in higher plants by transforming trans-cinnamate into p-coumarate. The compounds formed by this pathway are essential components for lignification, pollination, and defense against ultraviolet light, predators and pathogens. In Ruta graveolens (Common rue), this protein is Trans-cinnamate 4-monooxygenase (CYP73A2).